Reading from the N-terminus, the 261-residue chain is Glucose 1-dehydrogenase 2 (261 aa).

Val11–Val35 serves as a coordination point for NADP(+). Ser145 contacts substrate. Tyr158 functions as the Proton acceptor in the catalytic mechanism.

Belongs to the short-chain dehydrogenases/reductases (SDR) family. In terms of assembly, homotetramer.

The catalysed reaction is D-glucose + NAD(+) = D-glucono-1,5-lactone + NADH + H(+). The enzyme catalyses D-glucose + NADP(+) = D-glucono-1,5-lactone + NADPH + H(+). The polypeptide is Glucose 1-dehydrogenase 2 (gdhII) (Priestia megaterium (Bacillus megaterium)).